The chain runs to 51 residues: Putative protein LomR (51 aa).

The protein belongs to the outer membrane OOP (TC 1.B.6) superfamily. Ail family.

The sequence is that of Putative protein LomR (lomR) from Escherichia coli (strain K12).